The chain runs to 263 residues: uncharacterized protein (263 aa).

Residue 31–38 (GPTGSGKT) coordinates ATP.

It belongs to the CbbQ/NirQ/NorQ/GpvN family.

This is an uncharacterized protein from Staphylococcus aureus (strain USA300).